Reading from the N-terminus, the 95-residue chain is Bacterial microcompartment shell protein EutM (95 aa).

In terms of domain architecture, BMC spans 6–90 (ALGMIETKGL…PHFEVDAILP (85 aa)).

This sequence belongs to the bacterial microcompartments protein family. As to quaternary structure, homohexamer; has a positively charged pore 9 Angstroms in diameter. The hexamers pack into a two-dimensional array. May interact with EutQ.

It is found in the bacterial microcompartment. It functions in the pathway amine and polyamine degradation; ethanolamine degradation. A component of the bacterial microcompartment (BMC) shell dedicated to ethanolamine degradation. Each homohexamer has a central pore with an opening of up to 9.0 Angstroms. Expression of the eut operon may allow this bacteria to use ethanolamine as a carbon, nitrogen and energy source. The pore probably allows metabolite passage into and out of the BMC. This Clostridioides difficile (strain 630) (Peptoclostridium difficile) protein is Bacterial microcompartment shell protein EutM.